Reading from the N-terminus, the 830-residue chain is DNA helicase MCM8 (830 aa).

The 208-residue stretch at 392-599 (LLKLIVNSLC…QHDHLLSEHV (208 aa)) folds into the MCM domain. 444 to 451 (GDPGLGKS) contacts ATP. S620 carries the post-translational modification Phosphoserine.

It belongs to the MCM family. Component of the MCM8-MCM9 complex, which forms a hexamer composed of MCM8 and MCM9. Interacts with the DNA mismatch repair (MMR) complex composed at least of MSH2, MSH3, MSH6, PMS1 and MLH1. Interacts with RAD51; the interaction recruits RAD51 to DNA damage sites. Interacts with the MRN complex composed of MRE11, RAD50 and NBN/NBS1. Interacts with CDC6 and ORC2. Interacts with HROB; the interaction recruits the MCM8-MCM9 complex to DNA damage sites.

Its subcellular location is the nucleus. It is found in the chromosome. It catalyses the reaction ATP + H2O = ADP + phosphate + H(+). Its function is as follows. Component of the MCM8-MCM9 complex, a complex involved in the repair of double-stranded DNA breaks (DBSs) and DNA interstrand cross-links (ICLs) by homologous recombination (HR). Required for DNA resection by the MRE11-RAD50-NBN/NBS1 (MRN) complex by recruiting the MRN complex to the repair site and by promoting the complex nuclease activity. Probably by regulating the localization of the MNR complex, indirectly regulates the recruitment of downstream effector RAD51 to DNA damage sites including DBSs and ICLs. The MCM8-MCM9 complex is dispensable for DNA replication and S phase progression. However, may play a non-essential for DNA replication: may be involved in the activation of the prereplicative complex (pre-RC) during G(1) phase by recruiting CDC6 to the origin recognition complex (ORC). Probably by regulating HR, plays a key role during gametogenesis. Stabilizes MCM9 protein. This is DNA helicase MCM8 (Mcm8) from Rattus norvegicus (Rat).